Here is an 848-residue protein sequence, read N- to C-terminus: Crooked neck-like protein 1 (848 aa).

Residue Thr-2 is modified to N-acetylalanine. The interval 81 to 106 is disordered; that stretch reads RSSRTPHSTRCRKEDAQPGHHGNGAA. HAT repeat units follow at residues 222 to 254, 256 to 288, 290 to 322, 324 to 355, 357 to 388, 390 to 425, 427 to 461, 471 to 503, 505 to 539, 549 to 585, 587 to 618, 620 to 652, 654 to 688, 690 to 721, 726 to 767, 769 to 807, and 809 to 834; these read DYKLRKRKTFEDNIRKNRTVISNWIKYAQWEES, KEIQRARSIYERALDVDYRNITLWLKYAEMEMK, RQVNHARNIWDRAITTLPRVNQFWYKYTYMEEM, GNVAGARQVFERWMEWQPEEQAWHSYINFELR, KEVDRARTIYERFVLVHPDVKNWIKYARFEEK, AYFAHARKVYERAVEFFGDEHMDEHLYVAFAKFEEN, KEFERVRVIYKYALDRISKQDAQELFKNYTIFEKK, IIVSKRRFQYEEEVKANPHNYDAWFDYLRLVES, AEAEAVREVYERAIANVPPIQEKRHWKRYIYLWIN, KDPERTRQVYQASLELIPHKKFTFAKMWILYAQFEIR, KNLSLARRALGTSIGKCPKNKLFKVYIELELQ, REFDRCRKLYEKFLEFGPENCTSWIKFAELETI, GDIDRARAIYELAISQPRLDMPEVLWKSYIDFEIE, EETERTRNLYRRLLQRTQHVKVWISFAQFELS, GSLT…EFGT, SDKERVDKLMPEKVKKRRKVQTDDGSDAGWEEYFDYIFP, and DAANQPNLKLLAMAKLWKKQQQEKED. A mediates interaction with HSP90 region spans residues 411–628; it reads MDEHLYVAFA…LREFDRCRKL (218 aa). Phosphoserine is present on Ser-503. The interval 827-848 is disordered; it reads KQQQEKEDAEHHPDEDVDESES. The segment covering 828-840 has biased composition (basic and acidic residues); the sequence is QQQEKEDAEHHPD.

Belongs to the crooked-neck family. In terms of assembly, identified in the spliceosome C complex. Present in a spliceosome complex assembled in vitro containing CRNKL1, HPRP8BP and SNRPB2. Component of the minor spliceosome, which splices U12-type introns. Isoform 2 seems to be predominant in the spliceosome complex. Interacts with PPIL2 (via the PPIase cyclophilin-type domain); they may form a trimeric complex with HSP90. In terms of tissue distribution, widely expressed. Highly expressed in testis. Not detected in brain and lung.

It is found in the nucleus. Its subcellular location is the nucleus speckle. Functionally, involved in pre-mRNA splicing process. As a component of the minor spliceosome, involved in the splicing of U12-type introns in pre-mRNAs. This is Crooked neck-like protein 1 (CRNKL1) from Homo sapiens (Human).